Reading from the N-terminus, the 333-residue chain is Adenosine deaminase (333 aa).

Zn(2+) is bound by residues H12 and H14. Substrate is bound by residues H14, D16, and G170. H197 contacts Zn(2+). Residue E200 is the Proton donor of the active site. Zn(2+) is bound at residue D278. D279 is a binding site for substrate.

The protein belongs to the metallo-dependent hydrolases superfamily. Adenosine and AMP deaminases family. Adenosine deaminase subfamily. It depends on Zn(2+) as a cofactor.

The catalysed reaction is adenosine + H2O + H(+) = inosine + NH4(+). The enzyme catalyses 2'-deoxyadenosine + H2O + H(+) = 2'-deoxyinosine + NH4(+). Functionally, catalyzes the hydrolytic deamination of adenosine and 2-deoxyadenosine. The protein is Adenosine deaminase of Escherichia coli O81 (strain ED1a).